The sequence spans 309 residues: Protein-L-isoaspartate O-methyltransferase (309 aa).

Residues 1-46 (MSGERAKRFPLALEDLKRAPRKSDGRAGERHAAIAAPKAADKPAAV) form a disordered region. The span at 14–32 (EDLKRAPRKSDGRAGERHA) shows a compositional bias: basic and acidic residues. Residues 33 to 46 (AIAAPKAADKPAAV) show a composition bias toward low complexity. Residue serine 156 is part of the active site.

This sequence belongs to the methyltransferase superfamily. L-isoaspartyl/D-aspartyl protein methyltransferase family.

The protein resides in the cytoplasm. It catalyses the reaction [protein]-L-isoaspartate + S-adenosyl-L-methionine = [protein]-L-isoaspartate alpha-methyl ester + S-adenosyl-L-homocysteine. Catalyzes the methyl esterification of L-isoaspartyl residues in peptides and proteins that result from spontaneous decomposition of normal L-aspartyl and L-asparaginyl residues. It plays a role in the repair and/or degradation of damaged proteins. The protein is Protein-L-isoaspartate O-methyltransferase of Burkholderia vietnamiensis (strain G4 / LMG 22486) (Burkholderia cepacia (strain R1808)).